Here is a 322-residue protein sequence, read N- to C-terminus: tRNA-dihydrouridine(16) synthase (322 aa).

Residues 7–9 (PME) and Gln-68 each bind FMN. Cys-98 (proton donor) is an active-site residue. Residues Lys-139, 200–202 (NGE), and 224–225 (CR) each bind FMN.

The protein belongs to the Dus family. DusC subfamily. It depends on FMN as a cofactor.

The enzyme catalyses 5,6-dihydrouridine(16) in tRNA + NADP(+) = uridine(16) in tRNA + NADPH + H(+). It carries out the reaction 5,6-dihydrouridine(16) in tRNA + NAD(+) = uridine(16) in tRNA + NADH + H(+). Functionally, catalyzes the synthesis of 5,6-dihydrouridine (D), a modified base found in the D-loop of most tRNAs, via the reduction of the C5-C6 double bond in target uridines. Specifically modifies U16 in tRNAs. The polypeptide is tRNA-dihydrouridine(16) synthase (Vibrio parahaemolyticus serotype O3:K6 (strain RIMD 2210633)).